A 413-amino-acid polypeptide reads, in one-letter code: MRQFLSSDRINSEIPQEKSEMVGFSDIDNSSRQIKEMEAAFRSAVKTGQIPGAVIMARDHSGRLNYTRCFGARTVVRDECNRLPPMQVDTPCRLASATKLLTTIMALQCVERGLVRLDETVDRLLPDLSAMKVLEGFDAAGEPKMRERKGKITLKHLLTHTSGLSYVFLHPLLREYMAKGHLQTAEKFGIQSRLAPPAVNDPGAEWIYGANLDWTGKLVERATGLDLEQYLQENICAPLNITDMTFKLQQRPDLLARRADQTHRNKADGRLRYDDSVYFRSDGDECFGGQGVFSGPESYMKVVHSLLQRDGRLLRPETVDLMFQPALDAQTEKQMNQHMDASPHINYGGPMPMVLRRSFGLGGMIALEDLDGQKWRRKGCLTFGGGPNIVWVMLLSALRFVFFFFFFFFFCSS.

Residue Arg93 participates in monacolin J binding. Ser96 functions as the Acyl-ester intermediate in the catalytic mechanism. Residues Arg193, Tyr208, and Tyr278 each contribute to the monacolin J site. Position 386 (Gly386) interacts with 2-methylbutanoate.

Belongs to the class-A beta-lactamase family.

It catalyses the reaction monacolin J carboxylate + (S)-2-methylbutanoyl-[2-methylbutanoate polyketide synthase] = lovastatin carboxylate + holo-[2-methylbutanoate polyketide synthase]. The protein operates within polyketide biosynthesis; lovastatin biosynthesis. Functionally, acyltransferase; part of the gene cluster that mediates the biosynthesis of monakolin K, also known as lovastatin, and which acts as a potent competitive inhibitor of HMG-CoA reductase. Monakolin K biosynthesis is performed in two stages. The first stage is catalyzed by the nonaketide synthase mokA, which belongs to type I polyketide synthases and catalyzes the iterative nine-step formation of the polyketide. This PKS stage is completed by the action of dehydrogenase mokE, which catalyzes the NADPH-dependent reduction of the unsaturated tetra-, penta- and heptaketide intermediates that arise during the mokA-mediated biosynthesis of the nonaketide chain and leads to dihydromonacolin L. Covalently bound dihydromonacolin L is released from mokA by the mokD esterase. Conversion of dihydromonacolin L into monacolin L and then monacolin J is subsequently performed with the participation of molecular oxygen and P450 monoogygenase mokC. Finally, mokF performs the conversion of monacoline J to monacoline K through the addition of the side-chain diketide moiety (2R)-2-methylbutanoate produced by the diketide synthase mokB. The sequence is that of Acyltransferase mokF from Monascus pilosus (Red mold).